Reading from the N-terminus, the 308-residue chain is Apolipoprotein F (308 aa).

The protein belongs to the apolipoprotein F family.

The protein localises to the secreted. Functionally, minor apolipoprotein that associates with LDL. Inhibits cholesteryl ester transfer protein (CETP) activity and appears to be an important regulator of cholesterol transport. Also associates to a lesser degree with VLDL, Apo-AI and Apo-AII. This Rattus norvegicus (Rat) protein is Apolipoprotein F (Apof).